A 303-amino-acid polypeptide reads, in one-letter code: MTKLILAPEVQAAFANGQPVVALESTVISHGLPYPHNREIALQLEATVRAGGAVPATIAVIQGQVHVGLTNEQIEHFATATDVLKLSRRDIGYAVAAGRDGATTVAATMAIAELAGIQVFATGGIGGVHRGARDTWDVSADLGELGKSSVLVVCAGAKSILDLPATLEVLETYGVPVVGYTTEELPAFYSAHSGLQLGRRVDDPTQAAAAWAAHRLYGGGSGMVLAVPPPVEKALDPQFVEAAIGRAIAQAEAAGIRGAAVTPFLLSAMARETEGESIATNTALLNNNAQVAAQVAVALFQSV.

The active-site Proton donor is the E24. 2 residues coordinate substrate: K85 and V105. Mn(2+) is bound at residue D137. 139–141 contributes to the substrate binding site; that stretch reads SAD. The active-site Nucleophile is the K158.

It belongs to the pseudouridine-5'-phosphate glycosidase family. In terms of assembly, homotrimer. It depends on Mn(2+) as a cofactor.

It carries out the reaction D-ribose 5-phosphate + uracil = psi-UMP + H2O. Functionally, catalyzes the reversible cleavage of pseudouridine 5'-phosphate (PsiMP) to ribose 5-phosphate and uracil. Functions biologically in the cleavage direction, as part of a pseudouridine degradation pathway. The protein is Pseudouridine-5'-phosphate glycosidase of Herpetosiphon aurantiacus (strain ATCC 23779 / DSM 785 / 114-95).